The chain runs to 418 residues: Type II methyltransferase M.MspI (418 aa).

Residues Phe105–Val404 enclose the SAM-dependent MTase C5-type domain. Cys174 is a catalytic residue.

This sequence belongs to the class I-like SAM-binding methyltransferase superfamily. C5-methyltransferase family.

It carries out the reaction a 2'-deoxycytidine in DNA + S-adenosyl-L-methionine = a 5-methyl-2'-deoxycytidine in DNA + S-adenosyl-L-homocysteine + H(+). In terms of biological role, a methylase, recognizes the double-stranded sequence 5'-CCGG-3', methylates C-1 on both strands, and protects the DNA from cleavage by the MspI endonuclease. This chain is Type II methyltransferase M.MspI (mspIM), found in Moraxella sp.